Consider the following 853-residue polypeptide: Envelope glycoprotein gp160 (853 aa).

Residues 1-31 (MRVKEIRKNWQHLRGGILLLGMLMICSAAKE) form the signal peptide. Over 32–681 (KTWVTIYYGV…ITNWLWYIRL (650 aa)) the chain is Extracellular. Cysteines 53 and 73 form a disulfide. Residues asparagine 87, asparagine 129, asparagine 134, asparagine 138, asparagine 157, asparagine 189, asparagine 199, asparagine 232, asparagine 236, asparagine 243, asparagine 264, asparagine 278, asparagine 291, asparagine 297, asparagine 303, asparagine 333, asparagine 340, asparagine 356, and asparagine 362 are each glycosylated (N-linked (GlcNAc...) asparagine; by host). 5 cysteine pairs are disulfide-bonded: cysteine 118–cysteine 207, cysteine 125–cysteine 198, cysteine 130–cysteine 158, cysteine 220–cysteine 249, and cysteine 230–cysteine 241. The segment at 130-157 (CTNLNITKNTTNPTSSSWGMMEKGEIKN) is V1. Residues 158 to 198 (CSFYITTSIRNKVKKEYALFNRLDVVPIENTNNTKYRLISC) are V2. The V3 stretch occupies residues 298 to 331 (CTRPNNNTRRRLSIGPGRAFYARRNIIGDIRQAH). The cysteines at positions 298 and 332 are disulfide-linked. Residues 364–374 (SSGGDPEIVMH) form a CD4-binding loop region. Disulfide bonds link cysteine 378–cysteine 441 and cysteine 385–cysteine 414. Residues 385-414 (CNTAQLFNSTWNVTGGTNGTEGNDIITLQC) form a V4 region. N-linked (GlcNAc...) asparagine; by host glycosylation is found at asparagine 392, asparagine 396, asparagine 402, asparagine 444, and asparagine 456. The segment at 459–468 (ETETEIFRPG) is V5. The fusion peptide stretch occupies residues 509–529 (AVGIGAVFLGFLGAAGSTMGA). Residues 571–589 (KQLQARVLALERYLRDQQL) form an immunosuppression region. Residues cysteine 595 and cysteine 601 are joined by a disulfide bond. 4 N-linked (GlcNAc...) asparagine; by host glycosylation sites follow: asparagine 608, asparagine 613, asparagine 622, and asparagine 634. A coiled-coil region spans residues 630-664 (REIDNYTDYIYDLLEKSQTQQEKNEKELLELDKWA). Residues 659–680 (ELDKWASLWNWFDITNWLWYIR) are MPER; binding to GalCer. Residues 682–702 (FIMIVGGLIGLRIVFAVLSIV) traverse the membrane as a helical segment. At 703-853 (NRVRQGYSPL…IRQGLERALL (151 aa)) the chain is on the cytoplasmic side. The YXXL motif; contains endocytosis signal signature appears at 709–712 (YSPL). The segment at 718–740 (LPASRGPDRPEGTEEEGGERDRD) is disordered. Residues cysteine 761 and cysteine 834 are each lipidated (S-palmitoyl cysteine; by host). Positions 852 to 853 (LL) match the Di-leucine internalization motif motif.

The protein belongs to the HIV-1 env protein family. As to quaternary structure, the mature envelope protein (Env) consists of a homotrimer of non-covalently associated gp120-gp41 heterodimers. The resulting complex protrudes from the virus surface as a spike. There seems to be as few as 10 spikes on the average virion. Interacts with host CD4, CCR5 and CXCR4. Gp120 also interacts with the C-type lectins CD209/DC-SIGN and CLEC4M/DC-SIGNR (collectively referred to as DC-SIGN(R)). Gp120 and gp41 interact with GalCer. Gp120 interacts with host ITGA4/ITGB7 complex; on CD4+ T-cells, this interaction results in rapid activation of integrin ITGAL/LFA-1, which facilitates efficient cell-to-cell spreading of HIV-1. Gp120 interacts with cell-associated heparan sulfate; this interaction increases virus infectivity on permissive cells and may be involved in infection of CD4- cells. The mature envelope protein (Env) consists of a homotrimer of non-covalently associated gp120-gp41 heterodimers. The resulting complex protrudes from the virus surface as a spike. There seems to be as few as 10 spikes on the average virion. Highly glycosylated by host. The high number of glycan on the protein is reffered to as 'glycan shield' because it contributes to hide protein sequence from adaptive immune system. Post-translationally, palmitoylation of the transmembrane protein and of Env polyprotein (prior to its proteolytic cleavage) is essential for their association with host cell membrane lipid rafts. Palmitoylation is therefore required for envelope trafficking to classical lipid rafts, but not for viral replication. In terms of processing, specific enzymatic cleavages in vivo yield mature proteins. Envelope glycoproteins are synthesized as an inactive precursor that is heavily N-glycosylated and processed likely by host cell furin in the Golgi to yield the mature SU and TM proteins. The cleavage site between SU and TM requires the minimal sequence [KR]-X-[KR]-R. About 2 of the 9 disulfide bonds of gp41 are reduced by P4HB/PDI, following binding to CD4 receptor.

It is found in the virion membrane. Its subcellular location is the host cell membrane. The protein resides in the host endosome membrane. Oligomerizes in the host endoplasmic reticulum into predominantly trimers. In a second time, gp160 transits in the host Golgi, where glycosylation is completed. The precursor is then proteolytically cleaved in the trans-Golgi and thereby activated by cellular furin or furin-like proteases to produce gp120 and gp41. In terms of biological role, attaches the virus to the host lymphoid cell by binding to the primary receptor CD4. This interaction induces a structural rearrangement creating a high affinity binding site for a chemokine coreceptor like CXCR4 and/or CCR5. Acts as a ligand for CD209/DC-SIGN and CLEC4M/DC-SIGNR, which are respectively found on dendritic cells (DCs), and on endothelial cells of liver sinusoids and lymph node sinuses. These interactions allow capture of viral particles at mucosal surfaces by these cells and subsequent transmission to permissive cells. HIV subverts the migration properties of dendritic cells to gain access to CD4+ T-cells in lymph nodes. Virus transmission to permissive T-cells occurs either in trans (without DCs infection, through viral capture and transmission), or in cis (following DCs productive infection, through the usual CD4-gp120 interaction), thereby inducing a robust infection. In trans infection, bound virions remain infectious over days and it is proposed that they are not degraded, but protected in non-lysosomal acidic organelles within the DCs close to the cell membrane thus contributing to the viral infectious potential during DCs' migration from the periphery to the lymphoid tissues. On arrival at lymphoid tissues, intact virions recycle back to DCs' cell surface allowing virus transmission to CD4+ T-cells. Its function is as follows. Acts as a class I viral fusion protein. Under the current model, the protein has at least 3 conformational states: pre-fusion native state, pre-hairpin intermediate state, and post-fusion hairpin state. During fusion of viral and target intracellular membranes, the coiled coil regions (heptad repeats) assume a trimer-of-hairpins structure, positioning the fusion peptide in close proximity to the C-terminal region of the ectodomain. The formation of this structure appears to drive apposition and subsequent fusion of viral and target cell membranes. Complete fusion occurs in host cell endosomes and is dynamin-dependent, however some lipid transfer might occur at the plasma membrane. The virus undergoes clathrin-dependent internalization long before endosomal fusion, thus minimizing the surface exposure of conserved viral epitopes during fusion and reducing the efficacy of inhibitors targeting these epitopes. Membranes fusion leads to delivery of the nucleocapsid into the cytoplasm. The protein is Envelope glycoprotein gp160 of Human immunodeficiency virus type 1 group M subtype B (strain 89.6) (HIV-1).